The following is a 438-amino-acid chain: Asparagine--tRNA ligase (438 aa).

It belongs to the class-II aminoacyl-tRNA synthetase family. As to quaternary structure, homodimer.

The protein localises to the cytoplasm. It catalyses the reaction tRNA(Asn) + L-asparagine + ATP = L-asparaginyl-tRNA(Asn) + AMP + diphosphate + H(+). The chain is Asparagine--tRNA ligase from Thermus thermophilus (strain ATCC 27634 / DSM 579 / HB8).